We begin with the raw amino-acid sequence, 983 residues long: Next to BRCA1 gene 1 protein (983 aa).

Residues 4-86 form the PB1 domain; sequence QVTLNVTFKN…NQLQMQVHEG (83 aa). Ser-117 carries the phosphoserine modification. The disordered stretch occupies residues 126–149; that stretch reads MKTTEEPTAEARSPVPCDTDKPQD. The ZZ-type zinc finger occupies 214-266; sequence SWHIACSHCQKRIVGVRYQCSLCPSYNICEDCEAGPYSHDTNHILLKFRRPVV. Positions 219, 222, 233, 236, 242, 245, 252, and 256 each coordinate Zn(2+). 2 ATG8 family proteins-binding regions span residues 544 to 638 and 745 to 756; these read ASER…PASV and ASSEDYIIILPE. Thr-588 is modified (phosphothreonine). A phosphoserine mark is found at Ser-592 and Ser-598. Residues 611-645 are disordered; that stretch reads EESEGAGLKASPDSTVLTKRKAETPASVEETEEDL. The segment at 768–813 is disordered; the sequence is MYSSALSQPGLERGAEGEPGIESGQEPAEARERLPERESQPKEQSI. Basic and acidic residues predominate over residues 795–808; that stretch reads AEARERLPERESQP. Residue Ser-855 is modified to Phosphoserine. Positions 867–894 are disordered; it reads DHVRGEPRGSTGLANSRQKSCDHSRHHN. The region spanning 930–974 is the UBA domain; that stretch reads SEDQTAALMAHLFEMGFCDRQLNLRLLRKHNHNILQVVTELLQVN.

Homooligomer and heterooligomer. Interacts with TRIM55. Interacts with titin/TTN. Interacts with RNF29, USP8, MAP1LC3A, MAP1LC3B, MAP1LC3C, GABARAP, GABARAPL1 and GABARAPL2. Binds to ubiquitin and ubiquitinated proteins. Interacts with SQSTM1. Interacts with TAX1BP1. Interacts with IRF3; this interaction mediates autophagic degradation of IRF3. Interacts with IL12A and IL12B. Phosphorylated by GSK3A; this phosphorylation inhibits NBR1 involvement in the formation of ubiquitinated protein aggregates.

The protein resides in the cytoplasm. It localises to the cytoplasmic vesicle. Its subcellular location is the autophagosome. It is found in the lysosome. The protein localises to the myofibril. The protein resides in the sarcomere. It localises to the m line. Ubiquitin-binding autophagy adapter that participates in different processes including host defense or intracellular homeostasis. Possesses a double function during the selective autophagy by acting as a shuttle bringing ubiquitinated proteins to autophagosomes and also by participating in the formation of protein aggregates. Plays a role in the regulation of the innate immune response by modulating type I interferon production and targeting ubiquitinated IRF3 for autophagic degradation. In response to oxidative stress, promotes an increase in SQSTM1 levels, phosphorylation, and body formation by preventing its autophagic degradation. In turn, activates the KEAP1-NRF2/NFE2L2 antioxidant pathway. Also plays non-autophagy role by mediating the shuttle of IL-12 to late endosome for subsequent secretion. This Rattus norvegicus (Rat) protein is Next to BRCA1 gene 1 protein (Nbr1).